The primary structure comprises 348 residues: MAVTFDISPEKEAGVLRLFHSQLFVTPPPLTRRDVDLSGKTAIVTGANGGLGLETAHQLLDLGCKVILAVRRVERGEAARQKLLEGRDAQATEIEVWPLDLSSYESVVGFAERAKTLSRLDIAILNAGLYKVNQTMTASTGYEESIHVNYLANALLITLLAPIFKNKKTGNTPGRIVLVSSDLAAWAKFKERKSNPILPTFKQKMTPKWDYLERYGTSKVLGQFFVTELAKRVSPDAVLVTTTNCGLCHGSELSREGQGHLIGYVFNVVSRLFGRSCSVGARVFVHAAANPVLGASVHGQYVEDAKLKPMSPLIYKPGDLQLGSKLWEETMDELSFAGAREIIDSLTK.

NADP(+)-binding residues include Leu51, Arg75, Asp100, and Asn126. Catalysis depends on proton donor residues Ser180 and Tyr215. Residues Tyr215 and Lys219 each coordinate NADP(+). The active-site Lowers pKa of active site Tyr is the Lys219.

The protein belongs to the short-chain dehydrogenases/reductases (SDR) family.

Its pathway is secondary metabolite biosynthesis. Short-chain dehydrogenase; part of the gene cluster that mediates the biosynthesis of flavoglaucin and congeners (including aspergin, dihydroauroglaucin and auroglaucin), prenylated salicylaldehyde derivatives carrying a saturated or an unsaturated C-7 side chain. The PKS fogA releases the carboxylic acid (8E,10E,12E)-3,5,7-trihydroxytetradeca-8,10,12-trienoic acid as its product, as well as derivatives with one and two double bonds. FogA is indeed able to reduce the initial triketide, thus being at least partially responsible for the differently saturated heptyl side chains of flavoglaucin congeners. The oxidoreductases fogB, fogC and fogD modify the nascent polyketide in fogA-bound form and, together, fogA, fogB, fogC and fogD are necessary for the formation of the aromatic core and the cyclized PKS products are released as salicyl alcohols. In particular, fogB is responsible for oxidation of a hydroxyl group or reduction of remaining double bond(s) at the C-7 residue whereas fogD is probably involved in the reductive release of the modified PKS products. The cytochrome P450 monooxygenase fogE is then responsible for the hydroxylation at C-3 of the benzene ring. The fogE products are substrates of the prenyltransferase fogH and the prenylated benzyl alcohols are subsequently oxidized by the fogF to produce the final aryl aldehydes flavoglaucin and congeners. The short-chain dehydrogenase fogG does not seem to be involved in the biosynthesis of the prenylated salicylaldehyde derivatives. This is Short-chain dehydrogenase fogG from Aspergillus ruber (strain CBS 135680).